A 245-amino-acid polypeptide reads, in one-letter code: 2,3-bisphosphoglycerate-dependent phosphoglycerate mutase (245 aa).

Substrate-binding positions include 8 to 15 (RHGQSLWN), 21 to 22 (TG), Arg60, 87 to 90 (ERHY), Lys98, 114 to 115 (RR), and 183 to 184 (GN). Catalysis depends on His9, which acts as the Tele-phosphohistidine intermediate. Glu87 (proton donor/acceptor) is an active-site residue.

It belongs to the phosphoglycerate mutase family. BPG-dependent PGAM subfamily.

It catalyses the reaction (2R)-2-phosphoglycerate = (2R)-3-phosphoglycerate. The protein operates within carbohydrate degradation; glycolysis; pyruvate from D-glyceraldehyde 3-phosphate: step 3/5. Catalyzes the interconversion of 2-phosphoglycerate and 3-phosphoglycerate. The polypeptide is 2,3-bisphosphoglycerate-dependent phosphoglycerate mutase (Bacillus mycoides (strain KBAB4) (Bacillus weihenstephanensis)).